A 102-amino-acid polypeptide reads, in one-letter code: Parathymosin (102 aa).

Positions 1–102 (MSEKSVEAAA…RQKTENGASA (102 aa)) are disordered. N-acetylserine is present on S2. S2 bears the Phosphoserine mark. K4 carries the post-translational modification N6-acetyllysine. S5 and S13 each carry phosphoserine. Basic and acidic residues predominate over residues 13–37 (SAKDLKEKKEKVEEKASRKERKKEV). K15 carries the post-translational modification N6-acetyllysine. Over residues 38 to 76 (VEEEENGAEEEEEETAEDGEEEDEGEEEDEEEEEEDDEG) the composition is skewed to acidic residues. Position 52 is a phosphothreonine (T52). At K92 the chain carries N6-acetyllysine.

It belongs to the pro/parathymosin family.

Functionally, parathymosin may mediate immune function by blocking the effect of prothymosin alpha which confers resistance to certain opportunistic infections. The chain is Parathymosin (PTMS) from Homo sapiens (Human).